The chain runs to 262 residues: 1-(5-phosphoribosyl)-5-[(5-phosphoribosylamino)methylideneamino] imidazole-4-carboxamide isomerase (262 aa).

Asp8 (proton acceptor) is an active-site residue. The Proton donor role is filled by Asp130.

This sequence belongs to the HisA/HisF family.

The protein localises to the cytoplasm. It catalyses the reaction 1-(5-phospho-beta-D-ribosyl)-5-[(5-phospho-beta-D-ribosylamino)methylideneamino]imidazole-4-carboxamide = 5-[(5-phospho-1-deoxy-D-ribulos-1-ylimino)methylamino]-1-(5-phospho-beta-D-ribosyl)imidazole-4-carboxamide. It participates in amino-acid biosynthesis; L-histidine biosynthesis; L-histidine from 5-phospho-alpha-D-ribose 1-diphosphate: step 4/9. The polypeptide is 1-(5-phosphoribosyl)-5-[(5-phosphoribosylamino)methylideneamino] imidazole-4-carboxamide isomerase (Chloroherpeton thalassium (strain ATCC 35110 / GB-78)).